Here is a 476-residue protein sequence, read N- to C-terminus: Bifunctional protein HldE (476 aa).

Residues 1-319 (MKVTLPAFEK…EALKSHQGES (319 aa)) are ribokinase. 195 to 198 (NMSE) is a binding site for ATP. Asp-264 is an active-site residue. The interval 345–476 (MTNGCFDILH…AIIQNIMSRH (132 aa)) is cytidylyltransferase.

It in the N-terminal section; belongs to the carbohydrate kinase PfkB family. This sequence in the C-terminal section; belongs to the cytidylyltransferase family. In terms of assembly, homodimer.

It carries out the reaction D-glycero-beta-D-manno-heptose 7-phosphate + ATP = D-glycero-beta-D-manno-heptose 1,7-bisphosphate + ADP + H(+). The catalysed reaction is D-glycero-beta-D-manno-heptose 1-phosphate + ATP + H(+) = ADP-D-glycero-beta-D-manno-heptose + diphosphate. Its pathway is nucleotide-sugar biosynthesis; ADP-L-glycero-beta-D-manno-heptose biosynthesis; ADP-L-glycero-beta-D-manno-heptose from D-glycero-beta-D-manno-heptose 7-phosphate: step 1/4. It participates in nucleotide-sugar biosynthesis; ADP-L-glycero-beta-D-manno-heptose biosynthesis; ADP-L-glycero-beta-D-manno-heptose from D-glycero-beta-D-manno-heptose 7-phosphate: step 3/4. Its function is as follows. Catalyzes the phosphorylation of D-glycero-D-manno-heptose 7-phosphate at the C-1 position to selectively form D-glycero-beta-D-manno-heptose-1,7-bisphosphate. Catalyzes the ADP transfer from ATP to D-glycero-beta-D-manno-heptose 1-phosphate, yielding ADP-D-glycero-beta-D-manno-heptose. The sequence is that of Bifunctional protein HldE from Shewanella amazonensis (strain ATCC BAA-1098 / SB2B).